Consider the following 539-residue polypeptide: MIO-dependent tyrosine 2,3-aminomutase (539 aa).

The active-site Proton donor/acceptor is the tyrosine 63. Histidine 93 lines the substrate pocket. The segment at residues 152 to 154 (ASG) is a cross-link (5-imidazolinone (Ala-Gly)). Serine 153 is subject to 2,3-didehydroalanine (Ser). Positions 205 and 311 each coordinate substrate.

It belongs to the TAL/TAM family. As to quaternary structure, homotetramer; dimer of dimers. In terms of processing, contains an active site 4-methylidene-imidazol-5-one (MIO), which is formed autocatalytically by cyclization and dehydration of residues Ala-Ser-Gly.

The catalysed reaction is L-tyrosine = 3-amino-3-(4-hydroxyphenyl)propanoate. It carries out the reaction L-tyrosine = (E)-4-coumarate + NH4(+). Its function is as follows. Involved in the biosynthesis of the enediyne antitumor antibiotic C-1027. Catalyzes the MIO-dependent deamination of L-tyrosine generating the corresponding alpha,beta-unsaturated acid, (S)-beta-tyrosine. This is MIO-dependent tyrosine 2,3-aminomutase from Streptomyces globisporus.